The chain runs to 3707 residues: Basement membrane-specific heparan sulfate proteoglycan core protein (3707 aa).

Residues 1-21 form the signal peptide; sequence MGQRAVGSLLLGLLLHARLLA. S65, S71, and S76 each carry an O-linked (Xyl...) (heparan sulfate) serine glycan. Residues 80 to 191 form the SEA domain; sequence QMVYFRALVN…WGFKFRRLGT (112 aa). N89 carries N-linked (GlcNAc...) asparagine glycosylation. 4 consecutive LDL-receptor class A domains span residues 195–234, 281–319, 320–359, and 360–403; these read FPRV…ELNC, GPSA…ELGC, ASPP…EANC, and SVKQ…EFGC. 13 disulfide bridges follow: C199–C212, C206–C225, C219–C234, C285–C297, C292–C310, C304–C319, C325–C337, C332–C350, C344–C359, C368–C381, C375–C394, C388–C403, and C428–C479. N358 carries an N-linked (GlcNAc...) asparagine glycan. Positions 404-504 constitute an Ig-like C2-type 1 domain; it reads MPPQVVTPPQ…VLELVPQRGP (101 aa). Positions 521–530 constitute a Laminin EGF-like 1; first part domain; it reads CFCFGVTNVC. The 193-residue stretch at 538 to 730 folds into the Laminin IV type A 1 domain; the sequence is DQIRLSFDQP…IHGRAHSVEE (193 aa). N-linked (GlcNAc...) asparagine glycosylation occurs at N554. The 33-residue stretch at 731-763 folds into the Laminin EGF-like 1; second part domain; that stretch reads CRCPIGYSGLSCESCDAHFTRVPGGPYLGTCSG. 11 cysteine pairs are disulfide-bonded: C764-C773, C766-C780, C783-C792, C795-C811, C814-C829, C816-C839, C842-C851, C854-C869, C879-C892, C894-C903, and C906-C921. 2 Laminin EGF-like domains span residues 764 to 813 and 814 to 871; these read CNCN…ACRP and CPCP…KCRP. Residues 879 to 923 form the Laminin EGF-like 4; truncated domain; it reads CDERGSLGTSGETCRCKNNVVGRLCNECSDGSFHLSKQNPDGCLK. Positions 924–933 constitute a Laminin EGF-like 5; first part domain; sequence CFCMGVSRQC. Residues 941 to 1125 enclose the Laminin IV type A 2 domain; it reads AQVLGASEQP…GQDSAREVEQ (185 aa). The 33-residue stretch at 1126-1158 folds into the Laminin EGF-like 5; second part domain; it reads CTCPPGYRGPSCQDCDTGYTRVPSGLYLGTCER. 12 disulfides stabilise this stretch: C1159–C1168, C1161–C1175, C1178–C1187, C1190–C1206, C1209–C1224, C1211–C1234, C1237–C1246, C1249–C1263, C1275–C1287, C1277–C1293, C1295–C1304, and C1307–C1322. Laminin EGF-like domains lie at 1159–1208, 1209–1265, and 1275–1324; these read CNCH…DCQP, CPCY…PCHR, and CGCD…GCLP. Positions 1325 to 1334 constitute a Laminin EGF-like 9; first part domain; it reads CFCMGVTQQC. The Laminin IV type A 3 domain maps to 1344 to 1529; it reads ISTHFAPGDF…SGPRALEVEE (186 aa). Residues 1530 to 1562 enclose the Laminin EGF-like 9; second part domain; it reads CRCPPGYVGLSCQDCAPGYTRTGSGLYLGQCEL. 8 cysteine pairs are disulfide-bonded: C1563–C1572, C1565–C1579, C1582–C1591, C1594–C1610, C1613–C1628, C1615–C1638, C1641–C1650, and C1653–C1668. Laminin EGF-like domains are found at residues 1563–1612 and 1613–1670; these read CECN…DCQP and CACP…RCQP. 14 consecutive Ig-like C2-type domains span residues 1677 to 1771, 1772 to 1865, 1866 to 1954, 1955 to 2049, 2050 to 2148, 2149 to 2244, 2245 to 2343, 2344 to 2436, 2437 to 2532, 2533 to 2619, 2620 to 2720, 2721 to 2809, 2810 to 2895, and 2896 to 2980; these read EVQI…KPIM, VTVE…STAP, VASI…GGSG, PRVQ…PAPA, SPAP…PGVV, PPIR…PAPG, LAQP…RLRS, PVIS…PPTV, SVLP…APGT, PQVQ…VESP, PYAT…GGST, PTVQ…ALPS, VLIN…LVQA, and LPQI…LQVP. A disordered region spans residues 1713 to 1733; the sequence is DGRPLPSSAQQRHQGSELHFP. 3 disulfide bridges follow: C1792-C1839, C1886-C1932, and C1976-C2021. The tract at residues 2039 to 2061 is disordered; the sequence is SPSTNSPPAPASPAPIRIESSSS. The segment covering 2052–2061 has biased composition (low complexity); that stretch reads APIRIESSSS. 3 disulfides stabilise this stretch: C2073–C2118, C2170–C2215, and C2268–C2313. N-linked (GlcNAc...) asparagine glycans are attached at residues N2336, N2394, and N2427. Residues C2365 and C2413 are joined by a disulfide bond. Intrachain disulfides connect C2456-C2506 and C2554-C2599. Residue N2600 is glycosylated (N-linked (GlcNAc...) asparagine). C2641 and C2686 are oxidised to a cystine. Intrachain disulfides connect C2831–C2876 and C2917–C2962. The Laminin G-like 1 domain occupies 2984–3162; it reads IPYFTQTPYS…VNLTTHGISH (179 aa). N3098 and N3154 each carry an N-linked (GlcNAc...) asparagine glycan. 5 disulfides stabilise this stretch: C3137-C3163, C3166-C3177, C3171-C3187, C3204-C3216, and C3229-C3238. The EGF-like domain maps to 3163–3241; it reads CPTCQDRPCQ…GRSGVRCEEG (79 aa). One can recognise a Laminin G-like 2 domain in the interval 3245-3425; the sequence is TTPSMSGAGS…VGQCYDSSPC (181 aa). The N-linked (GlcNAc...) asparagine glycan is linked to N3385. 7 cysteine pairs are disulfide-bonded: C3393–C3419, C3425–C3436, C3430–C3446, C3448–C3457, C3464–C3476, C3470–C3481, and C3483–C3492. S3510 carries O-linked (Xyl...) (chondroitin sulfate) serine glycosylation. The region spanning 3518–3705 is the Laminin G-like 3 domain; it reads QYGAYFYDNG…AQAGANTRPC (188 aa). The Ca(2+) site is built by D3574 and L3591. A mediates motor neuron attachment region spans residues 3615–3617; sequence LRE. A3641 and N3643 together coordinate Ca(2+). The cysteines at positions 3671 and 3705 are disulfide-linked. The tract at residues 3680–3707 is disordered; the sequence is ARPGAPPPQPLDLQHRAQAGANTRPCPS.

In terms of assembly, has a strong tendency to aggregate in dimers or stellate structures. Interacts with other basement membrane components such as laminin, prolargin and collagen type IV. Interacts with COL13A1. Interacts with FGFBP1. Interacts with VWA1. Interacts (via C-terminus) with ECM1 (via C-terminus). Interacts with SVEP1. In terms of processing, proteolytic processing produces the C-terminal angiogenic peptide, endorepellin. This peptide can be further processed to produce the LG3 peptide. Post-translationally, O-glycosylated. Contains three heparan sulfate chains. Also contains chondroitin sulfate.

The protein resides in the secreted. It localises to the extracellular space. Its subcellular location is the extracellular matrix. The protein localises to the basement membrane. Functionally, integral component of basement membranes. Component of the glomerular basement membrane (GBM), responsible for the fixed negative electrostatic membrane charge, and which provides a barrier which is both size- and charge-selective. It serves as an attachment substrate for cells. Plays essential roles in vascularization. Critical for normal heart development and for regulating the vascular response to injury. Also required for avascular cartilage development. Its function is as follows. Anti-angiogenic and anti-tumor peptide that inhibits endothelial cell migration, collagen-induced endothelial tube morphogenesis and blood vessel growth in the chorioallantoic membrane. Blocks endothelial cell adhesion to fibronectin and type I collagen. Anti-tumor agent in neovascularization. Interaction with its ligand, integrin alpha2/beta1, is required for the anti-angiogenic properties. Evokes a reduction in phosphorylation of receptor tyrosine kinases via alpha2/beta1 integrin-mediated activation of the tyrosine phosphatase, PTPN6. In terms of biological role, has anti-angiogenic properties that require binding of calcium ions for full activity. The polypeptide is Basement membrane-specific heparan sulfate proteoglycan core protein (Hspg2) (Mus musculus (Mouse)).